The sequence spans 756 residues: Receptor-like protein 3 (756 aa).

Residues 1–50 form the signal peptide; the sequence is MTNEGRFKAKGFVRTSSTTRPIQALSFHMIGILLQCVLFISVLSIAVSEA. Residues 51-88 are N-cap; that stretch reads LCNSQDRESLLWFSGNVSSSVSPLNWNPSIDCCSWEGI. At 51–725 the chain is on the extracellular side; sequence LCNSQDRESL…ADTEDEEELK (675 aa). N-linked (GlcNAc...) asparagine glycosylation occurs at Asn-66. 18 LRR repeats span residues 95–119, 120–143, 145–169, 174–199, 201–225, 226–250, 252–274, 275–298, 299–322, 323–346, 348–370, 371–395, 397–419, 420–443, 445–471, 474–498, 499–521, and 522–546; these read DSHI…VLRL, HHLS…FLSA, DQLK…TFRN, CFPI…IFMQ, TFDL…MCKS, SPQL…LGRC, KLSV…IYNL, SELE…ITHL, TKLK…IGQL, SRLQ…LANC, NLVK…DFSR, FQSL…VHSC, SLSA…VLEL, ESLS…GILQ, CRNL…LISS, FPNL…LIKL, KSLA…WLGT, and FPHL…LFQL. Residues Asn-126 and Asn-169 are each glycosylated (N-linked (GlcNAc...) asparagine). Asn-208 is a glycosylation site (N-linked (GlcNAc...) asparagine). Residues Asn-262 and Asn-273 are each glycosylated (N-linked (GlcNAc...) asparagine). N-linked (GlcNAc...) asparagine glycans are attached at residues Asn-334 and Asn-345. Residue Asn-381 is glycosylated (N-linked (GlcNAc...) asparagine). Residues Asn-434, Asn-447, and Asn-459 are each glycosylated (N-linked (GlcNAc...) asparagine). Residues 548-569 form an LRR 19; degenerate repeat; it reads ALMSQKAYDATERNYLKLPVFV. 4 LRR repeats span residues 570-593, 608-631, 632-656, and 658-681; these read SPNN…IYIR, LKVL…ELSK, LTSL…LTSL, and YMSY…QFDT. N-linked (GlcNAc...) asparagine glycosylation occurs at Asn-573. Asn-666 carries N-linked (GlcNAc...) asparagine glycosylation. The interval 699 to 725 is C-cap/acidic domain; it reads LTSCKASTKLPATTTNKADTEDEEELK. Residues 726-746 traverse the membrane as a helical segment; that stretch reads FIFILGVATGFFVSYCFYWCF. Topologically, residues 747-756 are cytoplasmic; it reads FARLDAFISK.

This sequence belongs to the RLP family. In terms of tissue distribution, expressed at very low levels in the shoot apex.

Its subcellular location is the cell membrane. In terms of biological role, involved in the perception of CLV3 and CLV3-like peptides, that act as extracellular signals regulating meristems maintenance. Contributes, with WAKL22/RFO1, to resistance to F.oxysporum (f.) matthioli in cv. Columbia relative to cv. Ty-0. The sequence is that of Receptor-like protein 3 from Arabidopsis thaliana (Mouse-ear cress).